A 259-amino-acid polypeptide reads, in one-letter code: Type III pantothenate kinase (259 aa).

ATP is bound at residue 6–13; sequence DVGNTNIV. Substrate-binding positions include Y100 and 107 to 110; that span reads GADR. The active-site Proton acceptor is the D109. D129 serves as a coordination point for K(+). T132 is an ATP binding site. T184 contacts substrate.

It belongs to the type III pantothenate kinase family. As to quaternary structure, homodimer. NH4(+) is required as a cofactor. It depends on K(+) as a cofactor.

The protein localises to the cytoplasm. It catalyses the reaction (R)-pantothenate + ATP = (R)-4'-phosphopantothenate + ADP + H(+). It participates in cofactor biosynthesis; coenzyme A biosynthesis; CoA from (R)-pantothenate: step 1/5. Its function is as follows. Catalyzes the phosphorylation of pantothenate (Pan), the first step in CoA biosynthesis. The chain is Type III pantothenate kinase from Clostridium perfringens (strain 13 / Type A).